A 142-amino-acid polypeptide reads, in one-letter code: 3-hydroxyacyl-[acyl-carrier-protein] dehydratase FabZ (142 aa).

Residue His-41 is part of the active site.

This sequence belongs to the thioester dehydratase family. FabZ subfamily.

The protein localises to the cytoplasm. The catalysed reaction is a (3R)-hydroxyacyl-[ACP] = a (2E)-enoyl-[ACP] + H2O. Its function is as follows. Involved in unsaturated fatty acids biosynthesis. Catalyzes the dehydration of short chain beta-hydroxyacyl-ACPs and long chain saturated and unsaturated beta-hydroxyacyl-ACPs. The polypeptide is 3-hydroxyacyl-[acyl-carrier-protein] dehydratase FabZ (Symbiobacterium thermophilum (strain DSM 24528 / JCM 14929 / IAM 14863 / T)).